A 522-amino-acid polypeptide reads, in one-letter code: Peptide methionine sulfoxide reductase MsrA/MsrB (522 aa).

The 158-residue stretch at 17 to 174 (LALGACSPKI…ALALIRDPNA (158 aa)) folds into the Thioredoxin domain. Cysteines 68 and 71 form a disulfide. The segment at 199 to 354 (RTIYLAGGCF…PNGYCHIDIR (156 aa)) is peptide methionine sulfoxide reductase A. Residue cysteine 207 is part of the active site. Residues 383–506 (DAELKRTLTE…NGASLKFIPL (124 aa)) form the MsrB domain. Cysteine 440 and cysteine 495 are oxidised to a cystine. Cysteine 495 acts as the Nucleophile in catalysis.

This sequence in the N-terminal section; belongs to the thioredoxin family. It in the central section; belongs to the MsrA Met sulfoxide reductase family. The protein in the C-terminal section; belongs to the MsrB Met sulfoxide reductase family.

It carries out the reaction L-methionyl-[protein] + [thioredoxin]-disulfide + H2O = L-methionyl-(S)-S-oxide-[protein] + [thioredoxin]-dithiol. It catalyses the reaction [thioredoxin]-disulfide + L-methionine + H2O = L-methionine (S)-S-oxide + [thioredoxin]-dithiol. The catalysed reaction is L-methionyl-[protein] + [thioredoxin]-disulfide + H2O = L-methionyl-(R)-S-oxide-[protein] + [thioredoxin]-dithiol. Functionally, has an important function as a repair enzyme for proteins that have been inactivated by oxidation. Catalyzes the reversible oxidation-reduction of methionine sulfoxide in proteins to methionine. The polypeptide is Peptide methionine sulfoxide reductase MsrA/MsrB (msrAB) (Neisseria meningitidis serogroup A / serotype 4A (strain DSM 15465 / Z2491)).